The sequence spans 31 residues: Sarcolipin (31 aa).

The Cytoplasmic segment spans residues 1–7 (MERSTQE). Residues 8–26 (LFINFTVVLITVLLMWLLV) traverse the membrane as a helical segment. Over 27-31 (RSYQY) the chain is Lumenal.

Belongs to the sarcolipin family. Homooligomer. Can also form heterooligomers with other sarcoplasmic/endoplasmic reticulum calcium ATPase (SERCA) regulators ARLN, ERLN, PLN and STRIT1/DWORF. Monomer. Interacts with calcium ATPase ATP2A1/SERCA1. Interacts as a monomer with ATP2A2/SERCA2; the interaction decreases ATP2A2 Ca(2+) affinity. Interacts with VMP1; VMP1 competes with PLN and SLN to prevent them from forming an inhibitory complex with ATP2A2.

The protein resides in the sarcoplasmic reticulum membrane. The protein localises to the endoplasmic reticulum membrane. Its function is as follows. Reversibly inhibits the activity of ATP2A1/SERCA1 and ATP2A2/SERCA2 in sarcoplasmic reticulum by decreasing the apparent affinity of the ATPase for Ca(2+). Also inhibits the activity of ATP2A3/SERCA3. Modulates calcium re-uptake during muscle relaxation and plays an important role in calcium homeostasis in muscle. Required for muscle-based, non-shivering thermogenesis. This chain is Sarcolipin (Sln), found in Rattus norvegicus (Rat).